The sequence spans 306 residues: Ornithine carbamoyltransferase (306 aa).

Carbamoyl phosphate-binding positions include 46–49 (STRT), glutamine 73, arginine 97, and 124–127 (HPTQ). Residues asparagine 156, aspartate 220, and 224-225 (SM) each bind L-ornithine. Carbamoyl phosphate-binding positions include 260–261 (CL) and arginine 288.

The protein belongs to the aspartate/ornithine carbamoyltransferase superfamily. OTCase family.

It localises to the cytoplasm. The enzyme catalyses carbamoyl phosphate + L-ornithine = L-citrulline + phosphate + H(+). It participates in amino-acid degradation; L-arginine degradation via ADI pathway; carbamoyl phosphate from L-arginine: step 2/2. Reversibly catalyzes the transfer of the carbamoyl group from carbamoyl phosphate (CP) to the N(epsilon) atom of ornithine (ORN) to produce L-citrulline. This is Ornithine carbamoyltransferase from Campylobacter jejuni subsp. doylei (strain ATCC BAA-1458 / RM4099 / 269.97).